A 499-amino-acid chain; its full sequence is Catalase (499 aa).

The disordered stretch occupies residues 1-25; it reads MTDRPIMTTSAGAPIPDNQNSLTAG. Residues 7–23 show a composition bias toward polar residues; sequence MTTSAGAPIPDNQNSLT. Catalysis depends on residues H55 and N127. Heme is bound at residue Y337.

It belongs to the catalase family. As to quaternary structure, homotetramer. The cofactor is heme.

Its subcellular location is the periplasm. It carries out the reaction 2 H2O2 = O2 + 2 H2O. In terms of biological role, decomposes hydrogen peroxide into water and oxygen; serves to protect cells from the toxic effects of hydrogen peroxide. The protein is Catalase (katA) of Brucella abortus biovar 1 (strain 9-941).